A 465-amino-acid chain; its full sequence is Argininosuccinate lyase (465 aa).

Belongs to the lyase 1 family. Argininosuccinate lyase subfamily.

The protein localises to the cytoplasm. It catalyses the reaction 2-(N(omega)-L-arginino)succinate = fumarate + L-arginine. Its pathway is amino-acid biosynthesis; L-arginine biosynthesis; L-arginine from L-ornithine and carbamoyl phosphate: step 3/3. This is Argininosuccinate lyase from Methylococcus capsulatus (strain ATCC 33009 / NCIMB 11132 / Bath).